The chain runs to 449 residues: Probable aminotransferase TAT1 (449 aa).

Polar residues predominate over residues 1–12; it reads MNHNSNLVLPSH. Residues 1-20 are disordered; that stretch reads MNHNSNLVLPSHQTETQTQD.

The protein belongs to the class-I pyridoxal-phosphate-dependent aminotransferase family. The cofactor is pyridoxal 5'-phosphate.

The protein is Probable aminotransferase TAT1 of Arabidopsis thaliana (Mouse-ear cress).